A 570-amino-acid polypeptide reads, in one-letter code: Periplasmic trehalase (570 aa).

Residues 1-34 form the signal peptide; sequence MIPPEIRRSVLLQKAIKLALAGTLLTFASFSATA. Substrate contacts are provided by residues Arg159, 166 to 167, Asn203, 212 to 214, 284 to 286, and Gly317; these read WD, RSQ, and RPE. Residues Asp319 and Glu503 each act as proton donor/acceptor in the active site. Glu518 serves as a coordination point for substrate. The tract at residues 544-570 is disordered; sequence KPCDSVPSTRPASLSATPTKTPSAATQ. Residues 554 to 570 show a composition bias toward low complexity; the sequence is PASLSATPTKTPSAATQ.

This sequence belongs to the glycosyl hydrolase 37 family. As to quaternary structure, monomer.

It localises to the periplasm. It carries out the reaction alpha,alpha-trehalose + H2O = alpha-D-glucose + beta-D-glucose. Its function is as follows. Provides the cells with the ability to utilize trehalose at high osmolarity by splitting it into glucose molecules that can subsequently be taken up by the phosphotransferase-mediated uptake system. This Salmonella paratyphi B (strain ATCC BAA-1250 / SPB7) protein is Periplasmic trehalase.